Here is an 856-residue protein sequence, read N- to C-terminus: Facilitated trehalose transporter Tret1 (856 aa).

Disordered regions lie at residues 1–27 and 62–202; these read MSGR…GKLK and DPFL…KATS. The Cytoplasmic portion of the chain corresponds to 1–389; the sequence is MSGRDNRGAG…LEVYRPTTNP (389 aa). A compositionally biased stretch (polar residues) spans 69–80; the sequence is VSPQRHPQTVRT. The segment covering 133–142 has biased composition (basic and acidic residues); the sequence is EIREHRDRQQ. Residues 170-180 show a composition bias toward polar residues; the sequence is GNSNTNNNKAA. A phosphoserine mark is found at serine 247, serine 248, serine 249, serine 319, and serine 321. Positions 326–345 are disordered; the sequence is LTSRQHFQQQRSISTDSRKS. Positions 329–340 are enriched in polar residues; sequence RQHFQQQRSIST. Residues 390–410 traverse the membrane as a helical segment; sequence IFIWTQVLAALSVSLGSLVVG. Residues 411–439 are Extracellular-facing; the sequence is FVSAYTSPALVSMTDRNITSFEVTQDAGS. The N-linked (GlcNAc...) asparagine glycan is linked to asparagine 427. Residues 440 to 460 form a helical membrane-spanning segment; it reads WVGGIMPLAGLAGGIAGGPLI. Over 461-472 the chain is Cytoplasmic; it reads EYLGRRNTILAT. The helical transmembrane segment at 473–493 threads the bilayer; the sequence is AVPFIVSSLLIACAVNVAMVL. Over 494 to 496 the chain is Extracellular; that stretch reads CGR. Residues 497–517 form a helical membrane-spanning segment; sequence FLAGFCVGIASLSLPVYLGET. At 518-527 the chain is on the cytoplasmic side; that stretch reads VQPEVRGTLG. A helical transmembrane segment spans residues 528–548; the sequence is LLPTAFGNIGILLCFVAGSFM. A glycan (N-linked (GlcNAc...) asparagine) is linked at asparagine 549. At 549-551 the chain is on the extracellular side; that stretch reads NWS. Residues 552–572 form a helical membrane-spanning segment; sequence MLAFLGAALPVPFLILMFLIP. Residues 573–635 lie on the Cytoplasmic side of the membrane; sequence ETPRWFVSRG…ELLKRNNLKP (63 aa). Residues 636-656 form a helical membrane-spanning segment; sequence LSISLGLMFFQQLSGINAVIF. At 657 to 672 the chain is on the extracellular side; the sequence is YTVQIFKDAGSTIDGN. Residues 673-693 form a helical membrane-spanning segment; the sequence is ICTIIVGVVNFLATFIGIVLI. The Cytoplasmic segment spans residues 694 to 699; sequence DRAGRK. Residues 700–720 form a helical membrane-spanning segment; the sequence is ILLYVSNIAMILTLFVLGGFF. At 721–739 the chain is on the extracellular side; it reads YCKAHGPDVSNLGWLPLTC. A helical transmembrane segment spans residues 740–760; that stretch reads FVIYILGFSLGFGPIPWLMMG. At 761-766 the chain is on the cytoplasmic side; that stretch reads EILPAK. A helical membrane pass occupies residues 767 to 787; that stretch reads IRGSAASVATAFNWSCTFVVT. The Extracellular segment spans residues 788–800; the sequence is KTFQDLTVAMGAH. A helical membrane pass occupies residues 801–821; the sequence is GAFWLFGAICFVGLFFVIIYV. Residues 822-856 lie on the Cytoplasmic side of the membrane; that stretch reads PETQGKTLEDIERKMMGRVRRMSSVANIKPLSFNM. Serine 844 and serine 845 each carry phosphoserine.

It belongs to the major facilitator superfamily. Sugar transporter (TC 2.A.1.1) family. Trehalose transporter subfamily.

It localises to the cell membrane. In terms of biological role, low-capacity facilitative transporter for trehalose. Does not transport maltose, sucrose or lactose. Mediates the bidirectional transfer of trehalose. Responsible for the transport of trehalose synthesized in the fat body and the incorporation of trehalose into other tissues that require a carbon source, thereby regulating trehalose levels in the hemolymph. The polypeptide is Facilitated trehalose transporter Tret1 (Drosophila erecta (Fruit fly)).